The chain runs to 149 residues: Large ribosomal subunit protein bL9 (149 aa).

This sequence belongs to the bacterial ribosomal protein bL9 family.

Functionally, binds to the 23S rRNA. This Xanthomonas campestris pv. campestris (strain 8004) protein is Large ribosomal subunit protein bL9.